Here is a 517-residue protein sequence, read N- to C-terminus: FAD-dependent monooxygenase FUP4 (517 aa).

The N-terminal stretch at 1-19 is a signal peptide; sequence MRQSSTLTWTSVLLAPLAA. In terms of domain architecture, FAD-binding PCMH-type spans 75–246; it reads QALRPACLVH…TRFDLDLYDQ (172 aa). The residue at position 112 (His-112) is a Pros-8alpha-FAD histidine. Residues Asn-163, Asn-208, and Asn-346 are each glycosylated (N-linked (GlcNAc...) asparagine).

Belongs to the oxygen-dependent FAD-linked oxidoreductase family. FAD is required as a cofactor.

Its pathway is secondary metabolite biosynthesis; terpenoid biosynthesis. Functionally, FAD-dependent monooxygenase; part of the gene cluster that mediates the biosynthesis of the mycotoxin fusaproliferin (FUP) that belongs to the class of bicyclic sesterterpenoids. FUP4 catalyzes the oxidation of the hydroxy group at the C-16 position of preterpestacin III to a keto group, leading to the formation of (-)-terpestacin. The product of FUP1, preterpestacin I, might also serve as a substrate of FUP4 to yield oxo-preterpestacin I. The FUP biosynthetic pathway starts with the enzyme encoded by FUP1 that combines a C-terminal prenyltransferase domain responsible for the synthesis of geranylgeranyl diphosphate with the N-terminal terpene cyclase domain, to yield preterpestacin I. Preterpestacin I is then decorated by oxygenation steps that are catalyzed by two cytochrome P450 monooxygenases. First, FUP2 introduces a hydroxyl group at the C-24 position resulting in the formation of preterpestacin IIa. The second P450 monooxygenase catalyzes the hydroxylation at C-16 and C-17 of preterpestacin IIa, producing preterpestacin III. Subsequently, the FAD-dependent oxidoreductase FUP4 catalyzes the oxidation of the hydroxy group at the C-16 position to a keto group, leading to the formation of (-)-terpestacin, which is the immediate precursor of FUP. The final step in the proposed biosynthetic pathway is the addition of an acetyl group at the C-24 position of terpestacin, which is catalyzed by the acetyltransferase FUP5. The protein is FAD-dependent monooxygenase FUP4 of Fusarium proliferatum (strain ET1) (Orchid endophyte fungus).